A 134-amino-acid polypeptide reads, in one-letter code: Large ribosomal subunit protein eL32 (134 aa).

Belongs to the eukaryotic ribosomal protein eL32 family.

This is Large ribosomal subunit protein eL32 (RpL32) from Drosophila acanthoptera (Fruit fly).